The chain runs to 639 residues: E3 ubiquitin-protein ligase RNF12 (639 aa).

3 disordered regions span residues 1–28, 67–403, and 467–534; these read MESA…RLDR, RLQQ…ESER, and NDTD…GGVT. Residues 11–21 are compositionally biased toward low complexity; the sequence is STEQSESQRQS. Composition is skewed to polar residues over residues 110–138 and 147–166; these read SVRQ…NPNS and INVN…QSSE. Residues 213–228 are compositionally biased toward basic and acidic residues; that stretch reads RSPDQRRTRARTDRSR. The span at 244 to 253 shows a compositional bias: polar residues; it reads HSSSQTVDAS. Low complexity predominate over residues 269 to 286; that stretch reads SSQMQNSSSSNETEGSSR. Residues 290-302 are compositionally biased toward polar residues; that stretch reads HITARQQALGTEG. Low complexity-rich tracts occupy residues 303–327 and 335–348; these read QSQS…SQST and SRSS…DSSS. Residues 349 to 358 are compositionally biased toward polar residues; the sequence is NAETTGTGQR. The span at 372–382 shows a compositional bias: basic and acidic residues; sequence RPGDYRQRDSI. Over residues 383–399 the composition is skewed to polar residues; sequence ANRTRSRSQTPNNTVTY. 2 stretches are compositionally biased toward pro residues: residues 473-482 and 493-506; these read NPTPVSPPAA and PEPP…PEPV. The RING-type; atypical zinc finger occupies 585 to 626; it reads CSVCITEYTEGNKLRKLPCSHEYHVHCIDRWLSENSTCPICR. A PDZ-binding motif is present at residues 636 to 639; it reads ESIV.

It belongs to the RNF12 family. In terms of assembly, forms homodimers through the C-terminal region. The N-terminus interacts with the homeobox of LIM/homeobox factor lhx1/lim1, with lhx3/lim3 and lhx5/lim5, and with the N-terminus of ldb1.

It localises to the nucleus. The catalysed reaction is S-ubiquitinyl-[E2 ubiquitin-conjugating enzyme]-L-cysteine + [acceptor protein]-L-lysine = [E2 ubiquitin-conjugating enzyme]-L-cysteine + N(6)-ubiquitinyl-[acceptor protein]-L-lysine.. The protein operates within protein modification; protein ubiquitination. Functionally, acts as an E3 ubiquitin-protein ligase specific for ldb1, mediating ubiquitination and proteasome-dependent degradation of excess ldb1 in a RING-dependent manner. Does not degrade ldb1 bound to lhx1/lim1, nor lim1 itself and thus contributes to the establishment of proper ldb1-lhx1/lim1 stoichiometry and the formation of a ldb1-lhx1/lim1 complex. Interferes with Spemann organizer function and suppresses secondary axis formation induced by ldb1 and lhx1/lim1. This is E3 ubiquitin-protein ligase RNF12 from Xenopus tropicalis (Western clawed frog).